A 191-amino-acid polypeptide reads, in one-letter code: Imidazoleglycerol-phosphate dehydratase (191 aa).

It belongs to the imidazoleglycerol-phosphate dehydratase family.

The protein resides in the cytoplasm. It carries out the reaction D-erythro-1-(imidazol-4-yl)glycerol 3-phosphate = 3-(imidazol-4-yl)-2-oxopropyl phosphate + H2O. Its pathway is amino-acid biosynthesis; L-histidine biosynthesis; L-histidine from 5-phospho-alpha-D-ribose 1-diphosphate: step 6/9. In Methanosarcina barkeri (strain Fusaro / DSM 804), this protein is Imidazoleglycerol-phosphate dehydratase.